We begin with the raw amino-acid sequence, 610 residues long: Zinc metalloproteinase-disintegrin-like brevilysin H6 (610 aa).

Residues 1 to 20 (MIQVLLVTICLAAFPYQGSS) form the signal peptide. A propeptide spanning residues 21–191 (IILESGNVND…ASQLNLTPEQ (171 aa)) is cleaved from the precursor. Residue Gln192 is modified to Pyrrolidone carboxylic acid. In terms of domain architecture, Peptidase M12B spans 198–394 (RFVELVLVAD…HNPECIVNEP (197 aa)). Residues Glu201 and Asp285 each coordinate Ca(2+). 4 disulfide bridges follow: Cys309–Cys389, Cys349–Cys373, Cys351–Cys356, and Cys373–Cys378. Position 334 (His334) interacts with Zn(2+). Glu335 is an active-site residue. Zn(2+)-binding residues include His338 and His344. Asn372 carries an N-linked (GlcNAc...) asparagine glycan. Residues Cys389, Asn392, Val404, Asn407, Leu409, Glu411, Glu414, and Asp417 each coordinate Ca(2+). Residues 402–488 (PPVCGNELLE…ECPADVFHKN (87 aa)) enclose the Disintegrin domain. Cystine bridges form between Cys405–Cys424, Cys405–Cys434, Cys416–Cys429, Cys416–Cys434, Cys418–Cys424, Cys428–Cys451, Cys442–Cys448, Cys447–Cys473, Cys460–Cys480, Cys467–Cys492, Cys467–Cys499, Cys492–Cys504, Cys499–Cys504, Cys511–Cys526, Cys511–Cys561, Cys526–Cys572, Cys539–Cys549, Cys549–Cys556, Cys556–Cys598, Cys561–Cys572, Cys592–Cys603, and Cys598–Cys603. The D/ECD-tripeptide signature appears at 466-468 (ECD). Residues Asp468, Pro469, Glu471, Asp483, and Val484 each contribute to the Ca(2+) site.

The protein belongs to the venom metalloproteinase (M12B) family. P-III subfamily. P-IIIb sub-subfamily. As to quaternary structure, monomer. Zn(2+) is required as a cofactor. In the absence of calcium ions, is autocatalytically degraded giving 29 (p29K) and 45 kDa (p45K) fragments. In presence of calcium ions, the p45K is not detected. As to expression, expressed by the venom gland.

The protein resides in the secreted. Inhibited by chelating agents. Calcium ions enhance its activity, they also suppress autoproteolysis, and contribute to the stability of the enzyme against pH, heating, urea and cysteine. In terms of biological role, shows weak hemorrhagic activity. Rapidly degrades the alpha-chain of fibrinogen (FGA). In Gloydius brevicauda (Korean slamosa snake), this protein is Zinc metalloproteinase-disintegrin-like brevilysin H6.